Here is a 204-residue protein sequence, read N- to C-terminus: FMN-dependent NADH:quinone oxidoreductase (204 aa).

FMN contacts are provided by residues serine 10, 16-18 (SIS), and 96-99 (MYNF).

The protein belongs to the azoreductase type 1 family. As to quaternary structure, homodimer. Requires FMN as cofactor.

The enzyme catalyses 2 a quinone + NADH + H(+) = 2 a 1,4-benzosemiquinone + NAD(+). It carries out the reaction N,N-dimethyl-1,4-phenylenediamine + anthranilate + 2 NAD(+) = 2-(4-dimethylaminophenyl)diazenylbenzoate + 2 NADH + 2 H(+). Its function is as follows. Quinone reductase that provides resistance to thiol-specific stress caused by electrophilic quinones. Also exhibits azoreductase activity. Catalyzes the reductive cleavage of the azo bond in aromatic azo compounds to the corresponding amines. This is FMN-dependent NADH:quinone oxidoreductase from Herminiimonas arsenicoxydans.